A 317-amino-acid polypeptide reads, in one-letter code: Glycerol-3-phosphate dehydrogenase [NAD(P)+] (317 aa).

Residues tryptophan 20, arginine 40, arginine 41, and lysine 88 each coordinate NADPH. The sn-glycerol 3-phosphate site is built by lysine 88 and glycine 116. Position 120 (serine 120) interacts with NADPH. Sn-glycerol 3-phosphate-binding residues include lysine 171, aspartate 224, serine 234, arginine 235, and asparagine 236. Residue lysine 171 is the Proton acceptor of the active site. Arginine 235 lines the NADPH pocket. Glutamate 261 serves as a coordination point for NADPH.

It belongs to the NAD-dependent glycerol-3-phosphate dehydrogenase family.

The protein localises to the cytoplasm. The catalysed reaction is sn-glycerol 3-phosphate + NAD(+) = dihydroxyacetone phosphate + NADH + H(+). The enzyme catalyses sn-glycerol 3-phosphate + NADP(+) = dihydroxyacetone phosphate + NADPH + H(+). It functions in the pathway membrane lipid metabolism; glycerophospholipid metabolism. Functionally, catalyzes the reduction of the glycolytic intermediate dihydroxyacetone phosphate (DHAP) to sn-glycerol 3-phosphate (G3P), the key precursor for phospholipid synthesis. This chain is Glycerol-3-phosphate dehydrogenase [NAD(P)+], found in Synechocystis sp. (strain ATCC 27184 / PCC 6803 / Kazusa).